Consider the following 358-residue polypeptide: uncharacterized protein (358 aa).

Belongs to the methyltransferase superfamily.

This is an uncharacterized protein from Mycobacterium tuberculosis (strain CDC 1551 / Oshkosh).